A 100-amino-acid polypeptide reads, in one-letter code: Integration host factor subunit alpha (100 aa).

The interval 53 to 72 (FDLRDKRQRPGRNPKTGEEI) is disordered.

It belongs to the bacterial histone-like protein family. As to quaternary structure, heterodimer of an alpha and a beta chain.

In terms of biological role, this protein is one of the two subunits of integration host factor, a specific DNA-binding protein that functions in genetic recombination as well as in transcriptional and translational control. The polypeptide is Integration host factor subunit alpha (Pseudomonas entomophila (strain L48)).